A 38-amino-acid polypeptide reads, in one-letter code: Natriuretic peptide DNP (38 aa).

C7 and C23 form a disulfide bridge. Positions 19–38 (SNLGCPSLRDPRPNAPSTSA) are disordered.

This sequence belongs to the natriuretic peptide family. In terms of tissue distribution, expressed by the venom gland.

The protein localises to the secreted. Its function is as follows. Exhibits vasodilator, natriuretic and diuretic properties in animal models and human tissues. Acts by stimulating cGMP via the natriuretic peptide receptor 1 (NPR1). Is a poor agonist of the atrial natriuretic peptide receptor 2 (NPR2). Is not degraded by neutral endopeptidase (NEP/MME). Binds to atrial natriuretic peptide clearance receptor (NPR-C/NPR3), which may be responsible of the removal of DNP from the circulation. Increases calcium uptake and induces histamine release from rat peritoneal mast cells. Increases calcium-activated potassium (KCa) current in gastric antral circular smooth muscle cells by increasing cGMP production and activating inositol trisphosphate receptors (IP3Rs). In vivo, reduces both systolic and diastolic blood pressure with no effect on heart rate, when intravenously injected in conscious rabbits. In Dendroaspis angusticeps (Eastern green mamba), this protein is Natriuretic peptide DNP.